Consider the following 448-residue polypeptide: MNVNAAPEIVGRASQGVTPGYMSGFGNSFETEALPGALPVGRNSPQRAAYGLYAEQLSGSPFTAPRGANERSWLYRIRPSVKHSGRFAKADMGLWRSAPCLEHDMPIAQLRWDAPPMPTEEVTFVQGVRTMTTAGDVNTQAGMAAHMYLISRSMVDQHFYNADGELMFVPQQGRLRLVTEFGVIAIEPAEIAVIPRGVKFRVELVDGPARGYLCENYGGAFTLPERGPIGANCLANSRDFLTPVASYEDKDTPTELFVKWGGALWRTSLPHSPIDVVAWHGNYAPYKYDLRTFSPVGAIGFDHPDPSIFTVLTSPSETAGTANIDFVIFPERWMVAENTFRPPWYHMNIMSEFMGLIYGVYDAKPQGFAPGGASLHNMMLPHGPDREAFDHASNGELKPVKLTGTMAFMLETRYPQRVTEYAATADTLQDDYADCWRGLEKRFDPSRP.

H303 acts as the Proton acceptor in catalysis. Fe cation is bound by residues H346 and E352. Residues Y361 and H382 each contribute to the homogentisate site. Position 382 (H382) interacts with Fe cation.

It belongs to the homogentisate dioxygenase family. Hexamer; dimer of trimers. It depends on Fe cation as a cofactor.

It carries out the reaction homogentisate + O2 = 4-maleylacetoacetate + H(+). It functions in the pathway amino-acid degradation; L-phenylalanine degradation; acetoacetate and fumarate from L-phenylalanine: step 4/6. Involved in the catabolism of homogentisate (2,5-dihydroxyphenylacetate or 2,5-OH-PhAc), a central intermediate in the degradation of phenylalanine and tyrosine. Catalyzes the oxidative ring cleavage of the aromatic ring of homogentisate to yield maleylacetoacetate. This chain is Homogentisate 1,2-dioxygenase, found in Rhodopseudomonas palustris (strain BisB5).